We begin with the raw amino-acid sequence, 346 residues long: PPE family protein PPE17 (346 aa).

The interval Phe6–Ala159 is PPE.

Belongs to the mycobacterial PPE family. In terms of assembly, interacts with LRR motifs 15-20 of host Toll-like receptor 2 (TLR2).

The protein resides in the secreted. It is found in the cell wall. The protein localises to the cell surface. Induces pro-inflammatory responses. Induces host TLR1/2 heterodimerization, which causes an increased recruitment of IRAK1, MYD88, and protein kinase C epsilon (PRKCE) to the downstream TLR-signaling complex that translocates PRKCE into the nucleus in an IRAK1-dependent manner. PRKCE-mediated phosphorylation allowed the nuclear IRAK3 to be exported to the cytoplasm, leading to increased activation of ERK1/2, stabilization of MAPK phosphatase 1 (MKP1), and induction of TNF-alpha with concomitant down-regulation of MAP kinase p38. Functionally, during M.tuberculosis and HIV-1 co-infection, can stimulate transcription from the long terminal repeat (LTR) of HIV-1 in monocyte/macrophage cells. Interaction with human TLR2 activates the NF-kappa-B transcription factor, which binds to the promoter region of the HIV-1 and induces HIV-1 gene expression. The chain is PPE family protein PPE17 (PPE17) from Mycobacterium tuberculosis (strain ATCC 25618 / H37Rv).